Reading from the N-terminus, the 211-residue chain is Holliday junction resolvase RecU (211 aa).

Positions 87, 89, 102, and 121 each coordinate Mg(2+).

This sequence belongs to the RecU family. Mg(2+) is required as a cofactor.

It localises to the cytoplasm. The catalysed reaction is Endonucleolytic cleavage at a junction such as a reciprocal single-stranded crossover between two homologous DNA duplexes (Holliday junction).. Endonuclease that resolves Holliday junction intermediates in genetic recombination. Cleaves mobile four-strand junctions by introducing symmetrical nicks in paired strands. Promotes annealing of linear ssDNA with homologous dsDNA. Required for DNA repair, homologous recombination and chromosome segregation. This Limosilactobacillus fermentum (strain NBRC 3956 / LMG 18251) (Lactobacillus fermentum) protein is Holliday junction resolvase RecU.